Consider the following 405-residue polypeptide: Maintenance of mitochondrial morphology protein 1 (405 aa).

Residues 1–86 lie on the Lumenal side of the membrane; that stretch reads MQVLNFYVNP…TGSTKSFTQG (86 aa). Residues 87–107 form a helical membrane-spanning segment; that stretch reads LIIGQLSVIILLGIFIKFFVF. Topologically, residues 108–405 are cytoplasmic; that stretch reads ADSSTTSSTS…QPVSTTESDH (298 aa). In terms of domain architecture, SMP-LTD spans 166-385; the sequence is APESLDWFNV…EPRFQVVKLP (220 aa). Residues 303-324 are disordered; it reads SEPRVAMDSPQSTRDDNSEEPN.

The protein belongs to the MMM1 family. In terms of assembly, homodimer. Component of the ER-mitochondria encounter structure (ERMES) or MDM complex, composed of MMM1, MDM10, MDM12 and MDM34. An MMM1 homodimer associates with one molecule of MDM12 on each side in a pairwise head-to-tail manner, and the SMP-LTD domains of MMM1 and MDM12 generate a continuous hydrophobic tunnel for phospholipid trafficking.

The protein resides in the endoplasmic reticulum membrane. Component of the ERMES/MDM complex, which serves as a molecular tether to connect the endoplasmic reticulum (ER) and mitochondria. Components of this complex are involved in the control of mitochondrial shape and protein biogenesis, and function in nonvesicular lipid trafficking between the ER and mitochondria. The MDM12-MMM1 subcomplex functions in the major beta-barrel assembly pathway that is responsible for biogenesis of all outer membrane beta-barrel proteins, and acts in a late step after the SAM complex. The MDM10-MDM12-MMM1 subcomplex further acts in the TOM40-specific pathway after the action of the MDM12-MMM1 complex. Essential for establishing and maintaining the structure of mitochondria and maintenance of mtDNA nucleoids. In Meyerozyma guilliermondii (strain ATCC 6260 / CBS 566 / DSM 6381 / JCM 1539 / NBRC 10279 / NRRL Y-324) (Yeast), this protein is Maintenance of mitochondrial morphology protein 1.